A 950-amino-acid chain; its full sequence is Protocadherin alpha-9 (950 aa).

The N-terminal stretch at 1–29 (MLYSSRGDPEGQPLLLSLLILAMWVVGSG) is a signal peptide. 6 Cadherin domains span residues 30-133 (QLHY…PPVF), 134-242 (PATQ…APVF), 243-350 (DRTL…APQL), 351-455 (TIKT…APAF), 456-565 (AQPE…APAL), and 588-678 (GVVV…APKS). At 30 to 697 (QLHYSVPEEA…GPEVTLVDVN (668 aa)) the chain is on the extracellular side. Asn-254 and Asn-265 each carry an N-linked (GlcNAc...) asparagine glycan. Residue Asn-548 is glycosylated (N-linked (GlcNAc...) asparagine). The chain crosses the membrane as a helical span at residues 698 to 718 (VYLIIAICAVSSLLVLTLLLY). The Cytoplasmic portion of the chain corresponds to 719–950 (TVLRCSAMPT…GNSTTDNSDQ (232 aa)). The PXXP 1 repeat unit spans residues 734 to 737 (PGKP). Residues 734-894 (PGKPTLVCSS…PDKFIIPGSP (161 aa)) form a 5 X 4 AA repeats of P-X-X-P region. Disordered stretches follow at residues 759-808 (CSGE…DWRY) and 827-950 (ILRA…NSDQ). Residues 789-798 (PSASSDSSGK) are compositionally biased toward polar residues. PXXP repeat units follow at residues 799-802 (PRQP), 832-835 (PGGP), 873-876 (PGNP), and 891-894 (PGSP). Positions 909 to 923 (DKSDFITFGKKEETK) are enriched in basic and acidic residues.

The protein resides in the cell membrane. Functionally, potential calcium-dependent cell-adhesion protein. May be involved in the establishment and maintenance of specific neuronal connections in the brain. This is Protocadherin alpha-9 (PCDHA9) from Pan troglodytes (Chimpanzee).